A 471-amino-acid chain; its full sequence is Alpha-galactosidase (471 aa).

An N-terminal signal peptide occupies residues 1-18; it reads MFNLNFFNYTCHCEWCFW. Cys42 and Cys74 form a disulfide bridge. An N-linked (GlcNAc...) asparagine glycan is attached at Asn43. The substrate site is built by Asp72 and Asp73. The N-linked (GlcNAc...) asparagine glycan is linked to Asn105. A disulfide bond links Cys121 and Cys151. Lys147 provides a ligand contact to substrate. Asp149 serves as the catalytic Nucleophile. An N-linked (GlcNAc...) asparagine glycan is attached at Asn175. Arg205 is a substrate binding site. Asp209 acts as the Proton donor in catalysis. 2 cysteine pairs are disulfide-bonded: Cys221/Cys237 and Cys223/Cys230. A substrate-binding site is contributed by Gln251. N-linked (GlcNAc...) asparagine glycans are attached at residues Asn270, Asn370, Asn403, Asn417, Asn422, and Asn454.

It belongs to the glycosyl hydrolase 27 family. Homotetramer.

Its subcellular location is the secreted. The enzyme catalyses Hydrolysis of terminal, non-reducing alpha-D-galactose residues in alpha-D-galactosides, including galactose oligosaccharides, galactomannans and galactolipids.. In Saccharomyces paradoxus (Yeast), this protein is Alpha-galactosidase (MEL).